We begin with the raw amino-acid sequence, 160 residues long: Transcription elongation factor GreA (160 aa).

Residues 10–37 (TLEGKAKLENELQELKTVKRKEVVERIK) are a coiled coil.

It belongs to the GreA/GreB family.

Functionally, necessary for efficient RNA polymerase transcription elongation past template-encoded arresting sites. The arresting sites in DNA have the property of trapping a certain fraction of elongating RNA polymerases that pass through, resulting in locked ternary complexes. Cleavage of the nascent transcript by cleavage factors such as GreA or GreB allows the resumption of elongation from the new 3'terminus. GreA releases sequences of 2 to 3 nucleotides. The protein is Transcription elongation factor GreA of Listeria welshimeri serovar 6b (strain ATCC 35897 / DSM 20650 / CCUG 15529 / CIP 8149 / NCTC 11857 / SLCC 5334 / V8).